A 1828-amino-acid polypeptide reads, in one-letter code: Dedicator of cytokinesis protein 2 (1828 aa).

The region spanning 8 to 69 (DKERHGVAIY…PTSFIHLKEV (62 aa)) is the SH3 domain. At K304 the chain carries N6-acetyllysine. Residues 423–607 (RNDIYITLLQ…DVFSISTLVC (185 aa)) form the C2 DOCK-type domain. Residues S588 and S593 each carry the phosphoserine modification. An N6-acetyllysine modification is found at K738. Residues 1210-1621 (YKDNNREEMY…VEKEYGVREM (412 aa)) enclose the DOCKER domain. The segment at 1652–1703 (SDCSTPSKVPAESFDLESAPPKTPKVEEEPISPGSTLPEVKLRRSKKRTKRS) is disordered. A phosphoserine mark is found at S1683, S1704, S1729, and S1782.

This sequence belongs to the DOCK family. As to quaternary structure, homodimer. Interacts with RAC1 and RAC2. Interacts with CRKL and VAV. Interacts with CD3Z. As to expression, specifically expressed in hematopoietic cells.

It is found in the endomembrane system. It localises to the cytoplasm. Its subcellular location is the cytoskeleton. In terms of biological role, involved in cytoskeletal rearrangements required for lymphocyte migration in response of chemokines. Activates RAC1 and RAC2, but not CDC42, by functioning as a guanine nucleotide exchange factor (GEF), which exchanges bound GDP for free GTP. May also participate in IL2 transcriptional activation via the activation of RAC2. The sequence is that of Dedicator of cytokinesis protein 2 (Dock2) from Mus musculus (Mouse).